The chain runs to 901 residues: HTH-type transcriptional regulator MalT (901 aa).

Ser39 to Thr46 lines the ATP pocket. In terms of domain architecture, HTH luxR-type spans Glu829–Leu894. A DNA-binding region (H-T-H motif) is located at residues Asn853 to Arg872.

It belongs to the MalT family. As to quaternary structure, monomer in solution. Oligomerizes to an active state in the presence of the positive effectors ATP and maltotriose.

Activated by ATP and maltotriose, which are both required for DNA binding. Functionally, positively regulates the transcription of the maltose regulon whose gene products are responsible for uptake and catabolism of malto-oligosaccharides. Specifically binds to the promoter region of its target genes, recognizing a short DNA motif called the MalT box. This chain is HTH-type transcriptional regulator MalT, found in Salmonella heidelberg (strain SL476).